Reading from the N-terminus, the 352-residue chain is Large ribosomal subunit protein uL10 (352 aa).

The span at aspartate 286–aspartate 297 shows a compositional bias: acidic residues. The interval aspartate 286–glycine 352 is disordered. A compositionally biased stretch (low complexity) spans aspartate 299 to aspartate 310. Acidic residues predominate over residues glutamate 324–glycine 340. Positions glycine 343–glycine 352 are enriched in gly residues.

This sequence belongs to the universal ribosomal protein uL10 family. Part of the 50S ribosomal subunit. Forms part of the ribosomal stalk which helps the ribosome interact with GTP-bound translation factors. Forms a heptameric L10(L12)2(L12)2(L12)2 complex, where L10 forms an elongated spine to which the L12 dimers bind in a sequential fashion.

In terms of biological role, forms part of the ribosomal stalk, playing a central role in the interaction of the ribosome with GTP-bound translation factors. The chain is Large ribosomal subunit protein uL10 from Halobacterium salinarum (strain ATCC 700922 / JCM 11081 / NRC-1) (Halobacterium halobium).